The sequence spans 238 residues: Uridylate kinase (238 aa).

Residue 12-15 (KLSG) coordinates ATP. A UMP-binding site is contributed by Gly54. 2 residues coordinate ATP: Gly55 and Arg59. UMP contacts are provided by residues Asp74 and 135 to 142 (TGNPFFTT). ATP is bound by residues Thr162, Asn163, Tyr168, and Asp171.

This sequence belongs to the UMP kinase family. As to quaternary structure, homohexamer.

It localises to the cytoplasm. It carries out the reaction UMP + ATP = UDP + ADP. It participates in pyrimidine metabolism; CTP biosynthesis via de novo pathway; UDP from UMP (UMPK route): step 1/1. With respect to regulation, inhibited by UTP. Functionally, catalyzes the reversible phosphorylation of UMP to UDP. The protein is Uridylate kinase of Rhodopseudomonas palustris (strain HaA2).